We begin with the raw amino-acid sequence, 327 residues long: Elongation factor P--(R)-beta-lysine ligase (327 aa).

80 to 82 (SPE) contributes to the substrate binding site. ATP is bound by residues 104-106 (RNE) and N113. Y122 serves as a coordination point for substrate. Residue 246 to 247 (EL) participates in ATP binding. Substrate is bound at residue E253. ATP is bound at residue G302.

Belongs to the class-II aminoacyl-tRNA synthetase family. EpmA subfamily. In terms of assembly, homodimer.

It carries out the reaction D-beta-lysine + L-lysyl-[protein] + ATP = N(6)-((3R)-3,6-diaminohexanoyl)-L-lysyl-[protein] + AMP + diphosphate + H(+). In terms of biological role, with EpmB is involved in the beta-lysylation step of the post-translational modification of translation elongation factor P (EF-P). Catalyzes the ATP-dependent activation of (R)-beta-lysine produced by EpmB, forming a lysyl-adenylate, from which the beta-lysyl moiety is then transferred to the epsilon-amino group of a conserved specific lysine residue in EF-P. This chain is Elongation factor P--(R)-beta-lysine ligase, found in Haemophilus ducreyi (strain 35000HP / ATCC 700724).